The following is a 188-amino-acid chain: ATP synthase subunit b 2 (188 aa).

A helical membrane pass occupies residues Phe41–Pro61.

This sequence belongs to the ATPase B chain family. In terms of assembly, F-type ATPases have 2 components, F(1) - the catalytic core - and F(0) - the membrane proton channel. F(1) has five subunits: alpha(3), beta(3), gamma(1), delta(1), epsilon(1). F(0) has three main subunits: a(1), b(2) and c(10-14). The alpha and beta chains form an alternating ring which encloses part of the gamma chain. F(1) is attached to F(0) by a central stalk formed by the gamma and epsilon chains, while a peripheral stalk is formed by the delta and b chains.

It is found in the cell inner membrane. Functionally, f(1)F(0) ATP synthase produces ATP from ADP in the presence of a proton or sodium gradient. F-type ATPases consist of two structural domains, F(1) containing the extramembraneous catalytic core and F(0) containing the membrane proton channel, linked together by a central stalk and a peripheral stalk. During catalysis, ATP synthesis in the catalytic domain of F(1) is coupled via a rotary mechanism of the central stalk subunits to proton translocation. Its function is as follows. Component of the F(0) channel, it forms part of the peripheral stalk, linking F(1) to F(0). The b'-subunit is a diverged and duplicated form of b found in plants and photosynthetic bacteria. The sequence is that of ATP synthase subunit b 2 (atpF2) from Bartonella bacilliformis (strain ATCC 35685 / KC583 / Herrer 020/F12,63).